The primary structure comprises 199 residues: Crossover junction endodeoxyribonuclease RuvC (199 aa).

Catalysis depends on residues Asp-7, Glu-68, and Asp-141. Residues Asp-7, Glu-68, and Asp-141 each coordinate Mg(2+).

It belongs to the RuvC family. As to quaternary structure, homodimer which binds Holliday junction (HJ) DNA. The HJ becomes 2-fold symmetrical on binding to RuvC with unstacked arms; it has a different conformation from HJ DNA in complex with RuvA. In the full resolvosome a probable DNA-RuvA(4)-RuvB(12)-RuvC(2) complex forms which resolves the HJ. Mg(2+) serves as cofactor.

The protein localises to the cytoplasm. It catalyses the reaction Endonucleolytic cleavage at a junction such as a reciprocal single-stranded crossover between two homologous DNA duplexes (Holliday junction).. In terms of biological role, the RuvA-RuvB-RuvC complex processes Holliday junction (HJ) DNA during genetic recombination and DNA repair. Endonuclease that resolves HJ intermediates. Cleaves cruciform DNA by making single-stranded nicks across the HJ at symmetrical positions within the homologous arms, yielding a 5'-phosphate and a 3'-hydroxyl group; requires a central core of homology in the junction. The consensus cleavage sequence is 5'-(A/T)TT(C/G)-3'. Cleavage occurs on the 3'-side of the TT dinucleotide at the point of strand exchange. HJ branch migration catalyzed by RuvA-RuvB allows RuvC to scan DNA until it finds its consensus sequence, where it cleaves and resolves the cruciform DNA. The polypeptide is Crossover junction endodeoxyribonuclease RuvC (Saccharopolyspora erythraea (strain ATCC 11635 / DSM 40517 / JCM 4748 / NBRC 13426 / NCIMB 8594 / NRRL 2338)).